A 2789-amino-acid polypeptide reads, in one-letter code: Testis-expressed protein 15 (2789 aa).

The span at 34 to 46 shows a compositional bias: polar residues; sequence HNNTGSSTVTTSK. Disordered regions lie at residues 34–99, 169–191, 1063–1166, 2303–2331, and 2351–2379; these read HNNT…SSEV, ENQN…AYTK, FSSK…EHQP, KNIS…DTTV, and KATF…DSLK. The span at 47–59 shows a compositional bias: basic and acidic residues; that stretch reads SIKDPRLMRREES. Over residues 80-98 the composition is skewed to polar residues; it reads DNVNSEIKSTPSNSASSSE. The segment covering 170 to 179 has biased composition (basic and acidic residues); sequence NQNHSEEKAQ. Over residues 1063 to 1077 the composition is skewed to basic residues; that stretch reads FSSKRKYDKRRKKRA. Low complexity-rich tracts occupy residues 1106–1116 and 1134–1160; these read RKSMASSVSKS and SQLP…NPSL.

This sequence belongs to the TEX15 family. As to quaternary structure, interacts with PIWIL4 and PIWIL2. In terms of tissue distribution, expressed in testis, predominantly in germ cells. Low expression, if any, in ovary. Also expressed in several cancers.

It localises to the cytoplasm. Its subcellular location is the nucleus. Required during spermatogenesis for normal chromosome synapsis and meiotic recombination in germ cells. Necessary for formation of DMC1 and RAD51 foci on meiotic chromosomes, suggesting a specific role in DNA double-stranded break repair. Essential executor of PIWIL4-piRNA pathway directed transposon DNA methylation and silencing in the male embryonic germ cells. PIWIL4-piRNA binds to nascent transposon transcripts and interacts with TEX15, which may in turn recruit the epigenetic silencing machinery to the transposon loci. Not required for piRNA biosynthesis. This is Testis-expressed protein 15 (TEX15) from Homo sapiens (Human).